The sequence spans 511 residues: Pentatricopeptide repeat-containing protein At5g08510 (511 aa).

10 PPR repeats span residues 46 to 80, 81 to 115, 116 to 146, 147 to 181, 182 to 213, 214 to 248, 249 to 279, 281 to 315, 316 to 346, and 352 to 382; these read CTFL…GLRP, SHHT…GFES, DSFC…MSKR, DVPV…NVTS, WTTV…SVKP, NHIT…GFFD, NIYV…LGNQ, NLCS…GEKP, DAVT…MEEV, and KLEH…MPMK. Residues 387–462 are type E motif; it reads VWGTLLGACS…AAGYSYFVEV (76 aa). Residues 463–494 form a type E(+) motif region; that stretch reads GVDVHKFTVEDKSHPRSYEIYQVLEEIFRRMK.

This sequence belongs to the PPR family. PCMP-E subfamily.

The sequence is that of Pentatricopeptide repeat-containing protein At5g08510 (PCMP-E20) from Arabidopsis thaliana (Mouse-ear cress).